Reading from the N-terminus, the 119-residue chain is Fluoride-specific ion channel FluC (119 aa).

The next 4 helical transmembrane spans lie at 5–25, 34–54, 59–79, and 97–117; these read IIPL…LNLA, TGNL…AETI, WKLL…GFSL, and IFLH…IGAA. Na(+) contacts are provided by Gly-69 and Thr-72.

The protein belongs to the fluoride channel Fluc/FEX (TC 1.A.43) family.

It is found in the cell inner membrane. It catalyses the reaction fluoride(in) = fluoride(out). Na(+) is not transported, but it plays an essential structural role and its presence is essential for fluoride channel function. Functionally, fluoride-specific ion channel. Important for reducing fluoride concentration in the cell, thus reducing its toxicity. In Neisseria meningitidis serogroup C / serotype 2a (strain ATCC 700532 / DSM 15464 / FAM18), this protein is Fluoride-specific ion channel FluC.